Reading from the N-terminus, the 505-residue chain is Apolipoprotein N-acyltransferase (505 aa).

The next 6 membrane-spanning stretches (helical) occupy residues 15–46 (AAFV…LLLL), 55–75 (ALIA…WVHV), 89–109 (LFLM…FGWL), 129–149 (LWLI…WLWL), 161–181 (FAPI…AGSL), and 192–212 (MACI…MQWV). In terms of domain architecture, CN hydrolase spans 225–471 (IQGNIEQGLK…TGVLKATVTP (247 aa)). Catalysis depends on E264, which acts as the Proton acceptor. K330 is a catalytic residue. The Nucleophile role is filled by C382. The chain crosses the membrane as a helical span at residues 479–499 (FLWGTTPLYLWVGLAAGFAFW).

This sequence belongs to the CN hydrolase family. Apolipoprotein N-acyltransferase subfamily.

It localises to the cell inner membrane. The enzyme catalyses N-terminal S-1,2-diacyl-sn-glyceryl-L-cysteinyl-[lipoprotein] + a glycerophospholipid = N-acyl-S-1,2-diacyl-sn-glyceryl-L-cysteinyl-[lipoprotein] + a 2-acyl-sn-glycero-3-phospholipid + H(+). It functions in the pathway protein modification; lipoprotein biosynthesis (N-acyl transfer). Its function is as follows. Catalyzes the phospholipid dependent N-acylation of the N-terminal cysteine of apolipoprotein, the last step in lipoprotein maturation. The sequence is that of Apolipoprotein N-acyltransferase from Vibrio cholerae serotype O1 (strain ATCC 39315 / El Tor Inaba N16961).